The following is a 375-amino-acid chain: Homeobox protein Meis3 (375 aa).

Residues 25-51 (PETVPAVPGPYGPHRPPQPLPPGLDSD) form a disordered region. Positions 31-46 (VPGPYGPHRPPQPLPP) are enriched in pro residues. An MEIS N-terminal domain is found at 96–179 (GGDVCSSDSF…PIDLVIEDRD (84 aa)). 2 disordered regions span residues 197 to 268 (PDQN…KRGI) and 329 to 348 (NRTG…GGYT). Residues 227-241 (SQSGDNSSDQGDGLD) show a composition bias toward low complexity. A DNA-binding region (homeobox; TALE-type) is located at residues 262–324 (RNKKRGIFPK…NARRRIVQPM (63 aa)).

Belongs to the TALE/MEIS homeobox family.

The protein localises to the nucleus. Transcriptional regulator which directly modulates PDPK1 expression, thus promoting survival of pancreatic beta-cells. Also regulates expression of NDFIP1, BNIP3, and CCNG1. The chain is Homeobox protein Meis3 (MEIS3) from Homo sapiens (Human).